The sequence spans 87 residues: Large ribosomal subunit protein bL27 (87 aa).

This sequence belongs to the bacterial ribosomal protein bL27 family.

In Dechloromonas aromatica (strain RCB), this protein is Large ribosomal subunit protein bL27.